Consider the following 160-residue polypeptide: NADH-quinone oxidoreductase subunit B (160 aa).

Positions 37, 38, 102, and 132 each coordinate [4Fe-4S] cluster.

This sequence belongs to the complex I 20 kDa subunit family. As to quaternary structure, NDH-1 is composed of 14 different subunits. Subunits NuoB, C, D, E, F, and G constitute the peripheral sector of the complex. [4Fe-4S] cluster serves as cofactor.

Its subcellular location is the cell membrane. It carries out the reaction a quinone + NADH + 5 H(+)(in) = a quinol + NAD(+) + 4 H(+)(out). Functionally, NDH-1 shuttles electrons from NADH, via FMN and iron-sulfur (Fe-S) centers, to quinones in the respiratory chain. Couples the redox reaction to proton translocation (for every two electrons transferred, four hydrogen ions are translocated across the cytoplasmic membrane), and thus conserves the redox energy in a proton gradient. The chain is NADH-quinone oxidoreductase subunit B from Polynucleobacter asymbioticus (strain DSM 18221 / CIP 109841 / QLW-P1DMWA-1) (Polynucleobacter necessarius subsp. asymbioticus).